Consider the following 554-residue polypeptide: Terpene synthase 17 (554 aa).

Mg(2+)-binding residues include aspartate 306, aspartate 310, and glutamate 458. The DDXXD motif motif lies at 306 to 310; the sequence is DDTYD.

This sequence belongs to the terpene synthase family. Tpsa subfamily. Requires Mg(2+) as cofactor. The cofactor is Mn(2+). In terms of tissue distribution, mostly expressed in stem and trichomes, to a lower extent in leaves, flowers and roots and, at low levels, in fruits.

The catalysed reaction is (2Z,6Z)-farnesyl diphosphate = beta-bisabolene + diphosphate. It catalyses the reaction (2E,6E)-farnesyl diphosphate = (+)-valencene + diphosphate. It carries out the reaction (2E,6E)-farnesyl diphosphate = (E)-beta-farnesene + diphosphate. The enzyme catalyses (2E,6E)-farnesyl diphosphate = gamma-gurjunene + diphosphate. The catalysed reaction is (2Z,6Z)-farnesyl diphosphate = (E)-gamma-bisabolene + diphosphate. It catalyses the reaction (2E)-geranyl diphosphate = limonene + diphosphate. It carries out the reaction (2E)-geranyl diphosphate = beta-myrcene + diphosphate. The enzyme catalyses (2E)-geranyl diphosphate = (E)-beta-ocimene + diphosphate. The catalysed reaction is (2E)-geranyl diphosphate = terpinolene + diphosphate. It catalyses the reaction (2E)-geranyl diphosphate = gamma-terpinene + diphosphate. It carries out the reaction (2Z,6Z)-farnesyl diphosphate = (Z)-gamma-bisabolene + diphosphate. The enzyme catalyses (2E,6E)-farnesyl diphosphate = (1S,5S,6R)-alpha-bergamotene + diphosphate. The catalysed reaction is (2Z,6Z)-farnesyl diphosphate = (1S,5S,6S)-alpha-bergamotene + diphosphate. It participates in secondary metabolite biosynthesis; terpenoid biosynthesis. Sesquiterpene synthase involved in the biosynthesis of volatile compounds. Mediates the conversion of (2E,6E)-farnesyl diphosphate (FPP) into gamma-gurjunene, (E)-beta-farnesene and (+)-valencene, and of (2Z,6Z)-farnesyl diphosphate ((ZZ)-FPP) into (E)-alpha-bergamotene and (Z)-gamma-bisabolene as well as beta-bisabolene, (Z)-alpha-bergamotene and (E)-gamma-bisabolene to a lower extent. Can act with a low efficiency as a monoterpene synthase with geranyl diphosphate (GPP) as substrate, thus producing beta-myrcene, (E)-beta-ocimene, limonene, terpinolene, gamma-terpinene and (Z)-beta-ocimene. The protein is Terpene synthase 17 of Solanum lycopersicum (Tomato).